Consider the following 347-residue polypeptide: Tryptophan--tRNA ligase (347 aa).

ATP contacts are provided by residues 10-12 and 18-19; these read QAS and GN. The 'HIGH' region motif lies at 11 to 19; it reads ASGRQHLGN. An L-tryptophan-binding site is contributed by D140. ATP-binding positions include 152–154, I191, and 200–204; these read GND and KMSKS. Residues 200-204 carry the 'KMSKS' region motif; the sequence is KMSKS.

Belongs to the class-I aminoacyl-tRNA synthetase family. In terms of assembly, homodimer.

It localises to the cytoplasm. It carries out the reaction tRNA(Trp) + L-tryptophan + ATP = L-tryptophyl-tRNA(Trp) + AMP + diphosphate + H(+). Catalyzes the attachment of tryptophan to tRNA(Trp). The sequence is that of Tryptophan--tRNA ligase from Mycoplasma genitalium (strain ATCC 33530 / DSM 19775 / NCTC 10195 / G37) (Mycoplasmoides genitalium).